Here is an 88-residue protein sequence, read N- to C-terminus: Probable Fe(2+)-trafficking protein (88 aa).

Belongs to the Fe(2+)-trafficking protein family.

Functionally, could be a mediator in iron transactions between iron acquisition and iron-requiring processes, such as synthesis and/or repair of Fe-S clusters in biosynthetic enzymes. This Alkalilimnicola ehrlichii (strain ATCC BAA-1101 / DSM 17681 / MLHE-1) protein is Probable Fe(2+)-trafficking protein.